Here is a 284-residue protein sequence, read N- to C-terminus: Efem/EfeO family lipoprotein (284 aa).

The first 17 residues, 1–17 (MKKLTTLLLASTLLIAA), serve as a signal peptide directing secretion. C18 carries the N-palmitoyl cysteine lipid modification. C18 carries S-diacylglycerol cysteine lipidation.

Belongs to the EfeM/EfeO family.

Its subcellular location is the cell membrane. This is Efem/EfeO family lipoprotein from Staphylococcus aureus (strain MRSA252).